A 78-amino-acid polypeptide reads, in one-letter code: Small ribosomal subunit protein bS20 (78 aa).

This sequence belongs to the bacterial ribosomal protein bS20 family.

Its function is as follows. Binds directly to 16S ribosomal RNA. The polypeptide is Small ribosomal subunit protein bS20 (Streptococcus pneumoniae serotype 19F (strain G54)).